A 387-amino-acid polypeptide reads, in one-letter code: Diels-Alderase ORF3 (387 aa).

It belongs to the Diels-Alderase family.

Its pathway is secondary metabolite biosynthesis. Functionally, diels-Alderase; part of the gene cluster that mediates the biosynthesis of a tyrosine-derived cytochalasan acting as a fungal signal recognized by resistant rice plants and leads to avirulence in Pi33 resistant rice cultivars. The first step in the pathway is catalyzed by the hybrid PKS-NRPS ACE1, assisted by the enoyl reductase RAP1, that are responsible for fusion of the tyrosine precursor and the polyketide backbone. The polyketide synthase module (PKS) of ACE1 is responsible for the synthesis of the polyketide backbone and the downstream nonribosomal peptide synthetase (NRPS) amidates the carboxyl end of the polyketide with the tyrosine precursor. Because ACE1 lacks a designated enoylreductase (ER) domain, the required activity is provided the enoyl reductase RAP1. Reduction by the hydrolyase ORFZ, followed by dehydration and intra-molecular Diels-Alder cyclization by the Diels-Alderase ORF3 then yield the required isoindolone-fused macrocycle. A number of oxidative steps catalyzed by the tailoring enzymes identified within the cluster, including cytochrome P450 monooxygenases CYP1 to CYP4, the FAD-linked oxidoreductase OXR2 and the short-chain dehydrogenase/reductase OXR1, are further required to afford the final cytochalasans that confer avirulence and which have still to be identified. The monooxygenase CYP1 has been shown to be a site-selective C-18 hydroxylase whereas the function of CYP3 is the site-selective epoxidation of the C-6/C-7 olefin that is present in some intermediate compounds. Finally, SYN2 and RAP2 are not required for avirulence in Pi33 resistant rice cultivars. The sequence is that of Diels-Alderase ORF3 from Pyricularia oryzae (strain 70-15 / ATCC MYA-4617 / FGSC 8958) (Rice blast fungus).